Reading from the N-terminus, the 68-residue chain is Copper transport protein ATOX1 (68 aa).

The HMA domain occupies 1-63 (MPKHEFSVDM…TLGKTGKAVS (63 aa)). Cu cation is bound by residues Cys-12 and Cys-15. Ser-47 bears the Phosphoserine mark. Lys-60 is subject to N6-acetyllysine.

It belongs to the ATX1 family. Homodimer. Interacts with ATP7B. Interacts with ATP7A. Interacts (via dimer form) with SLC31A1 (via C-terminal domain); this interaction improves ATOX1 stability and controls intracellular Cu(I) levels.

Binds and deliver cytosolic copper to the copper ATPase proteins. May be important in cellular antioxidant defense. The sequence is that of Copper transport protein ATOX1 from Bos taurus (Bovine).